The following is a 597-amino-acid chain: MILPTALKSRLALEFETLPDPFRRPAARAAGLDPAHAWRLGWLAAVCLAAAAALFTADSGGWPVWAALGAGALPALVSLIFTREDERTQSWLLVLWAVGGSLAAVLTGGVGGAMAAWCLAPVAAASTQDQPKRLAEGAALALIGACVAALTQLSGLAPAAPTGPLAFVLGFLALVTTGLGLAAGLLIGRRRQGARDDRYASEIIGLETLLDGLPHLAIAVRGQGQVTAVRGAAPPGVTRADLVNRGLTGAAAPGDRQRLTAAIAQAHREGSASLTFNPALGVERVVALDMHRVAPNQLVGVLRDITVERHREHALDQARIDAEALAAGRARFLANMSHELRTPLNAIMGFSDIMRARMFGPLSDRYAEYAELIHESGGHLLDLINDVLDMSKIEAERFELQRGVFDAREAVQAAMRLLRVQSDTAGVQLRGVLPPGELEVDADRRALKQIVLNLVSNALKFTPRGGQVTVTAHGYDGVLEIVVADTGVGISPEDLERLGRPYEQAGGAEQRARGTGLGLSLVRAFAQLHGGEMVIESRLGAGTTVSVRLPVLLAPMVAATPTPPAAPEAPSAPEPAPTVEEPPPASLGDNVIAFAPR.

Helical transmembrane passes span 40–57 (LGWL…LFTA), 62–81 (WPVW…SLIF), 91–109 (WLLV…LTGG), 110–125 (VGGA…VAAA), 137–158 (GAAL…GLAP), and 159–188 (AAPT…LLIG). In terms of domain architecture, Histidine kinase spans 335-553 (NMSHELRTPL…TVSVRLPVLL (219 aa)). Phosphohistidine; by autocatalysis is present on histidine 338. Pro residues predominate over residues 561-585 (PTPPAAPEAPSAPEPAPTVEEPPPA). Residues 561 to 597 (PTPPAAPEAPSAPEPAPTVEEPPPASLGDNVIAFAPR) form a disordered region.

It localises to the cell membrane. The catalysed reaction is ATP + protein L-histidine = ADP + protein N-phospho-L-histidine.. Functionally, kinase required for the regulation of cell division and differentiation. Is part of a signal transduction pathway, activating PleD by phosphorylation. This chain is Histidine protein kinase DivJ (divJ), found in Caulobacter vibrioides (strain ATCC 19089 / CIP 103742 / CB 15) (Caulobacter crescentus).